We begin with the raw amino-acid sequence, 127 residues long: Fluoride-specific ion channel FluC (127 aa).

4 helical membrane-spanning segments follow: residues 4–24, 38–58, 71–91, and 104–124; these read FSIL…RYLV, YGTL…IAAF, VIGL…MDNV, and LNIL…FQLL. Residues Gly78 and Thr81 each contribute to the Na(+) site.

The protein belongs to the fluoride channel Fluc/FEX (TC 1.A.43) family.

Its subcellular location is the cell inner membrane. The enzyme catalyses fluoride(in) = fluoride(out). With respect to regulation, na(+) is not transported, but it plays an essential structural role and its presence is essential for fluoride channel function. In terms of biological role, fluoride-specific ion channel. Important for reducing fluoride concentration in the cell, thus reducing its toxicity. The sequence is that of Fluoride-specific ion channel FluC from Vibrio parahaemolyticus serotype O3:K6 (strain RIMD 2210633).